Consider the following 258-residue polypeptide: Axonemal dynein light intermediate polypeptide 1 (258 aa).

Disordered stretches follow at residues 1-60 and 207-231; these read MIPP…CVPD and VNEQ…EEKK. Over residues 34–44 the composition is skewed to low complexity; the sequence is SPQQPGPSGSA. The stretch at 176–255 forms a coiled coil; sequence MRKALQAEQG…LKAQLEGIIA (80 aa).

The protein belongs to the inner dynein arm light chain family. Interacts with CFAP45. Interacts with DYNC1H1. In terms of tissue distribution, expressed in many tissues. A smaller 0.9 kb and a larger 2.5 kb transcripts were detected at the highest level in the testis, at medium levels in the prostate, heart, liver, lung and pancreas, at low levels in the ovary, skeletal muscle and small intestine. Not detected in spleen, colon epithelium, thymus or peripheral blood leukocytes. The 0.9 kb transcript is expressed at a 20-fold higher level than the 2.5 kb transcript in the testis. Expressed in spermatozoa and airway epithelial cells (at protein level).

Its subcellular location is the cell projection. It is found in the cilium. The protein localises to the flagellum. It localises to the dynein axonemal particle. The protein resides in the cytoplasm. Its function is as follows. Involved in sperm flagellum assembly. In Homo sapiens (Human), this protein is Axonemal dynein light intermediate polypeptide 1.